A 974-amino-acid polypeptide reads, in one-letter code: Kinesin-like protein KIN-7A (974 aa).

Positions 1–29 are disordered; that stretch reads MTIKTPGTPVSKMDRTPAVTPGGSSRSRE. Residues 31 to 353 enclose the Kinesin motor domain; the sequence is KIVVTVRLRP…LYFANRAKEV (323 aa). Residue 117 to 124 participates in ATP binding; that stretch reads GQTSSGKT. 2 coiled-coil regions span residues 362-435 and 565-603; these read VVSD…KGLN and SANL…VMSL. 2 disordered regions span residues 605 to 649 and 663 to 713; these read SNIS…PCSP and NKAP…SSVN. Residues 616 to 628 are compositionally biased toward basic residues; sequence TKNHHHQSKKKKL. 2 stretches are compositionally biased toward polar residues: residues 638-649 and 666-682; these read NRQNFLKSPCSP and PQEN…TPQG. The span at 683–693 shows a compositional bias: basic and acidic residues; it reads SEKETPQKGEE.

This sequence belongs to the TRAFAC class myosin-kinesin ATPase superfamily. Kinesin family. KIN-7 subfamily. Phosphorylated at Thr-145, Thr-687 and Thr-703 by CDKAs and CDKBs. Phosphorylated NACK1 fails to mediate cytokinesis. In terms of tissue distribution, expressed in roots, flowers, pollen mother cells and embryos.

It is found in the cytoplasm. Its subcellular location is the cytoskeleton. The protein localises to the phragmoplast. Probable plus end-directed motor protein that functions in the NACK-PQR (ANP1-MKK6-MPK4) MAP kinase signaling pathway, which is essential for somatic cell cytokinesis, especially for the cell-plate formation and its expansion. Regulates the activity and the localization of ANP1, probably by association through the non-catalytic region of the kinase. Functionally redundant with NACK2 and essential to promote the progression of cytokinesis and for cellularization (formation of the cell plate) during microgametogenesis and megagametogenesis. This is Kinesin-like protein KIN-7A from Arabidopsis thaliana (Mouse-ear cress).